The primary structure comprises 29 residues: Glucagon (29 aa).

The protein belongs to the glucagon family.

The protein resides in the secreted. Glucagon plays a key role in glucose metabolism and homeostasis. Regulates blood glucose by increasing gluconeogenesis and decreasing glycolysis. In Lampetra fluviatilis (European river lamprey), this protein is Glucagon (gcg).